The chain runs to 760 residues: Elongation factor G, mitochondrial (760 aa).

The N-terminal 37 residues, 1-37 (MIRGMLPRGLRALRPSVSPTVVSSSLHRNFHSSIRRF), are a transit peptide targeting the mitochondrion. A tr-type G domain is found at 68-349 (SRLRNIGVSA…AVVDYLPQPN (282 aa)). Residues 77 to 84 (AHIDSGKT), 148 to 152 (DTPGH), and 202 to 205 (NKMD) each bind GTP.

The protein belongs to the TRAFAC class translation factor GTPase superfamily. Classic translation factor GTPase family. EF-G/EF-2 subfamily.

The protein resides in the mitochondrion. The protein operates within protein biosynthesis; polypeptide chain elongation. Its function is as follows. Mitochondrial GTPase that catalyzes the GTP-dependent ribosomal translocation step during translation elongation. During this step, the ribosome changes from the pre-translocational (PRE) to the post-translocational (POST) state as the newly formed A-site-bound peptidyl-tRNA and P-site-bound deacylated tRNA move to the P and E sites, respectively. Catalyzes the coordinated movement of the two tRNA molecules, the mRNA and conformational changes in the ribosome. The protein is Elongation factor G, mitochondrial of Meyerozyma guilliermondii (strain ATCC 6260 / CBS 566 / DSM 6381 / JCM 1539 / NBRC 10279 / NRRL Y-324) (Yeast).